Here is a 934-residue protein sequence, read N- to C-terminus: Serine/threonine-protein kinase PknD (934 aa).

The 293-residue stretch at 4 to 296 (YELIRLIGKG…ELRQALQPYL (293 aa)) folds into the Protein kinase domain. ATP-binding positions include 10-18 (IGKGGMGEV) and K33. D138 acts as the Proton acceptor in catalysis.

Belongs to the protein kinase superfamily. Ser/Thr protein kinase family. In terms of assembly, interacts with Pkn1. In terms of processing, autophosphorylated on serine and threonine residues.

The catalysed reaction is L-seryl-[protein] + ATP = O-phospho-L-seryl-[protein] + ADP + H(+). The enzyme catalyses L-threonyl-[protein] + ATP = O-phospho-L-threonyl-[protein] + ADP + H(+). Functionally, together with the serine/threonine kinase Pkn1, may play a role in the specific interactions with host proteins during intracellular growth. Autophosphorylates and also phosphorylates Pkn1. The chain is Serine/threonine-protein kinase PknD from Chlamydia trachomatis serovar D (strain ATCC VR-885 / DSM 19411 / UW-3/Cx).